Here is a 126-residue protein sequence, read N- to C-terminus: Large ribosomal subunit protein uL22 (126 aa).

It belongs to the universal ribosomal protein uL22 family. In terms of assembly, part of the 50S ribosomal subunit.

Functionally, this protein binds specifically to 23S rRNA; its binding is stimulated by other ribosomal proteins, e.g. L4, L17, and L20. It is important during the early stages of 50S assembly. It makes multiple contacts with different domains of the 23S rRNA in the assembled 50S subunit and ribosome. In terms of biological role, the globular domain of the protein is located near the polypeptide exit tunnel on the outside of the subunit, while an extended beta-hairpin is found that lines the wall of the exit tunnel in the center of the 70S ribosome. This chain is Large ribosomal subunit protein uL22, found in Paracoccus denitrificans (strain Pd 1222).